Consider the following 349-residue polypeptide: Homeobox-leucine zipper protein HOX7 (349 aa).

The tract at residues Arg-42 to Arg-186 is disordered. Polar residues-rich tracts occupy residues Ser-89 to Met-99 and Ser-121 to Val-135. Positions Gly-150–Gln-209 form a DNA-binding region, homeobox. Positions Asp-167 to Leu-183 are enriched in basic and acidic residues. Residues Lys-208–Leu-252 form a leucine-zipper region.

It belongs to the HD-ZIP homeobox family. Class II subfamily. As to quaternary structure, homodimer. May form a heterodimer with HOX1, HOX2 or HOX3. As to expression, expressed in seedlings, roots, leaves, nodes, internodes, flowers and embryo.

The protein resides in the nucleus. Its function is as follows. Probable transcription factor that binds to the DNA sequence 5'-CAAT[GC]ATTG-3'. The sequence is that of Homeobox-leucine zipper protein HOX7 (HOX7) from Oryza sativa subsp. japonica (Rice).